A 266-amino-acid chain; its full sequence is Putative cysteine-rich repeat secretory protein 20 (266 aa).

A signal peptide spans 1 to 33 (MYFPPSSVPKRLVLVHISAVVAIKLLLIRSVSS). Gnk2-homologous domains are found at residues 40–142 (YLQH…SIRN) and 148–261 (YNNN…LYPF).

The protein belongs to the cysteine-rich repeat secretory protein family.

The protein localises to the secreted. The polypeptide is Putative cysteine-rich repeat secretory protein 20 (CRRSP20) (Arabidopsis thaliana (Mouse-ear cress)).